A 498-amino-acid chain; its full sequence is Fascin-3 (498 aa).

The protein belongs to the fascin family. As to expression, expressed in testis.

It localises to the cytoplasm. It is found in the cytoskeleton. Its function is as follows. Acts as an actin bundling protein. The sequence is that of Fascin-3 (Fscn3) from Mus musculus (Mouse).